The primary structure comprises 312 residues: Glyoxylate/hydroxypyruvate reductase A (312 aa).

Arginine 227 is an active-site residue. Histidine 275 serves as the catalytic Proton donor.

The protein belongs to the D-isomer specific 2-hydroxyacid dehydrogenase family. GhrA subfamily.

The protein resides in the cytoplasm. It catalyses the reaction glycolate + NADP(+) = glyoxylate + NADPH + H(+). The enzyme catalyses (R)-glycerate + NAD(+) = 3-hydroxypyruvate + NADH + H(+). The catalysed reaction is (R)-glycerate + NADP(+) = 3-hydroxypyruvate + NADPH + H(+). Its function is as follows. Catalyzes the NADPH-dependent reduction of glyoxylate and hydroxypyruvate into glycolate and glycerate, respectively. This is Glyoxylate/hydroxypyruvate reductase A from Salmonella dublin (strain CT_02021853).